The primary structure comprises 993 residues: Structural polyprotein (993 aa).

Asp-11 lines the a divalent metal cation pocket. The Peptidase S50 domain occupies 494-736 (ADKGYEVVAN…AGRQYHLAMA (243 aa)). Ser-633 serves as the catalytic Nucleophile. The active site involves Lys-673. Residues 950 to 993 (AMEMKHRNPRRALPKPKPKPNAPTQRPPGRLGRWIRTVSDEDLE) form a disordered region. Basic residues predominate over residues 956–967 (RNPRRALPKPKP). Residues 984 to 993 (IRTVSDEDLE) are interaction with VP1 protein.

As to quaternary structure, homotrimer. A central divalent metal stabilizes the VP2 trimer. Interacts with host ITGA4/ITGB1. In terms of assembly, homodimer. Interacts (via C-terminus) with VP1 in the cytoplasm. Interacts with VP2. In terms of processing, specific enzymatic cleavages yield mature proteins. The capsid assembly seems to be regulated by polyprotein processing. The protease VP4 cleaves itself off the polyprotein, thus releasing pre-VP2 and VP3 within the infected cell. During capsid assembly, the C-terminus of pre-VP2 is further processed by VP4, giving rise to VP2, the external capsid protein and three small peptides that all stay closely associated with the capsid.

Its subcellular location is the virion. The protein localises to the host cytoplasm. Capsid protein VP2 self assembles to form an icosahedral capsid with a T=13 symmetry, about 70 nm in diameter, and consisting of 260 VP2 trimers. The capsid encapsulates the genomic dsRNA. VP2 is also involved in attachment and entry into the host cell by interacting with host ITGA4/ITGB1. In terms of biological role, the precursor of VP2 plays an important role in capsid assembly. First, pre-VP2 and VP2 oligomers assemble to form a procapsid. Then, the pre-VP2 intermediates may be processed into VP2 proteins by proteolytic cleavage mediated by VP4 to obtain the mature virion. The final capsid is composed of pentamers and hexamers but VP2 has a natural tendency to assemble into all-pentameric structures. Therefore pre-VP2 may be required to allow formation of the hexameric structures. Its function is as follows. Protease VP4 is a serine protease that cleaves the polyprotein into its final products. Pre-VP2 is first partially cleaved, and may be completely processed by VP4 upon capsid maturation. Functionally, capsid protein VP3 plays a key role in virion assembly by providing a scaffold for the capsid made of VP2. May self-assemble to form a T=4-like icosahedral inner-capsid composed of at least 180 trimers. Plays a role in genomic RNA packaging by recruiting VP1 into the capsid and interacting with the dsRNA genome segments to form a ribonucleoprotein complex. Additionally, the interaction of the VP3 C-terminal tail with VP1 removes the inherent structural blockade of the polymerase active site. Thus, VP3 can also function as a transcriptional activator. Structural peptide 1 is a small peptide derived from pre-VP2 C-terminus. It destabilizes and perforates cell membranes, suggesting a role during entry. In terms of biological role, structural peptide 2 is a small peptide derived from pVP2 C-terminus. It is not essential for the virus viability, but viral growth is affected when missing. Its function is as follows. Structural peptide 3 is a small peptide derived from pVP2 C-terminus. It is not essential for the virus viability, but viral growth is affected when missing. Functionally, structural peptide 4 is a small peptide derived from pVP2 C-terminus. It is essential for the virus viability. In Avian infectious bursal disease virus (strain PBG-98) (IBDV), this protein is Structural polyprotein.